The chain runs to 663 residues: Innate immunity activator protein (663 aa).

Residues 1 to 73 (MLQMPKLNEI…PGPGWDQCSP (73 aa)) are disordered. Low complexity predominate over residues 23–47 (EGRWAGPTGPEAARPARGARGQARG). A compositionally biased stretch (basic and acidic residues) spans 50 to 59 (ARWDSWEHSR). Residues 117–147 (NAVRKQQRALEARLEACLEELRRLCLREAEL) adopt a coiled-coil conformation. The Nuclear localization signal (NLS) 1 motif lies at 164-170 (PKVRRRI). Disordered regions lie at residues 219–363 (RQRK…SSLW) and 375–405 (IRNV…QSLR). Residues 225–246 (ALQEEKKLRDLQRCLGDRRRNS) show a composition bias toward basic and acidic residues. Over residues 259–272 (ELSASDDSSLSDGL) the composition is skewed to low complexity. Pro residues predominate over residues 282–298 (PKPPPESPAPPSRPLPP). Residues 327–340 (TSLDHPYEKPRKSS) are compositionally biased toward basic and acidic residues. The Nuclear localization signal (NLS) 2 signature appears at 332–338 (PYEKPRK). Positions 349–361 (PATTPQDQPNPSS) are enriched in polar residues. Residues 422–428 (PRRRPTH) carry the Nuclear localization signal (NLS) 3 motif. The disordered stretch occupies residues 448-483 (PACHSCSEDSGSDVSSISHPTSPGSSSPDISFLRPL). The span at 455 to 475 (EDSGSDVSSISHPTSPGSSSP) shows a compositional bias: low complexity.

Interacts with IRAK1, NOD2 and RIPK2; the interaction takes place upon PRR stimulation. Interacts with YWHAQ/14-3-3T; the interaction increases upon PRR stimulation and is required for cellular signaling pathway activation and cytokine secretion. Interacts (via N-terminal domain) with CYTH1 and CYTH2 (via their N-terminal domains). Interacts with FBXW11 and BTRC; associates with SCF E3 ubiquitin-protein ligase complexes.

It is found in the nucleus. It localises to the cytoplasm. Its function is as follows. Expressed in peripheral macrophages and intestinal myeloid-derived cells, is required for optimal PRR (pattern recognition receptor)-induced signaling, cytokine secretion, and bacterial clearance. Upon stimulation of a broad range of PRRs (pattern recognition receptor) such as NOD2 or TLR2, TLR3, TLR4, TLR5, TLR7 and TLR9, associates with YWHAQ/14-3-3T, which in turn leads to the recruitment and activation of MAP kinases and NF-kappa-B signaling complexes that amplifies PRR-induced downstream signals and cytokine secretion. In the intestine, regulates adherens junction stability by regulating the degradation of CYTH1 and CYTH2, probably acting as substrate cofactor for SCF E3 ubiquitin-protein ligase complexes. Stabilizes adherens junctions by limiting CYTH1-dependent ARF6 activation. The protein is Innate immunity activator protein of Mus musculus (Mouse).